The chain runs to 254 residues: 23S rRNA (guanosine-2'-O-)-methyltransferase RlmB (254 aa).

S-adenosyl-L-methionine-binding residues include Gly198, Ile218, and Leu227.

The protein belongs to the class IV-like SAM-binding methyltransferase superfamily. RNA methyltransferase TrmH family. RlmB subfamily. As to quaternary structure, homodimer.

It is found in the cytoplasm. The catalysed reaction is guanosine(2251) in 23S rRNA + S-adenosyl-L-methionine = 2'-O-methylguanosine(2251) in 23S rRNA + S-adenosyl-L-homocysteine + H(+). Specifically methylates the ribose of guanosine 2251 in 23S rRNA. This Blochmanniella floridana protein is 23S rRNA (guanosine-2'-O-)-methyltransferase RlmB.